The chain runs to 345 residues: Protein RecA (345 aa).

66-73 (GPESSGKT) serves as a coordination point for ATP.

This sequence belongs to the RecA family.

Its subcellular location is the cytoplasm. Functionally, can catalyze the hydrolysis of ATP in the presence of single-stranded DNA, the ATP-dependent uptake of single-stranded DNA by duplex DNA, and the ATP-dependent hybridization of homologous single-stranded DNAs. It interacts with LexA causing its activation and leading to its autocatalytic cleavage. The sequence is that of Protein RecA from Acidithiobacillus ferrooxidans (strain ATCC 23270 / DSM 14882 / CIP 104768 / NCIMB 8455) (Ferrobacillus ferrooxidans (strain ATCC 23270)).